The primary structure comprises 241 residues: Ubiquinone biosynthesis O-methyltransferase (241 aa).

4 residues coordinate S-adenosyl-L-methionine: arginine 46, glycine 66, aspartate 87, and methionine 131.

Belongs to the methyltransferase superfamily. UbiG/COQ3 family.

It catalyses the reaction a 3-demethylubiquinol + S-adenosyl-L-methionine = a ubiquinol + S-adenosyl-L-homocysteine + H(+). The enzyme catalyses a 3-(all-trans-polyprenyl)benzene-1,2-diol + S-adenosyl-L-methionine = a 2-methoxy-6-(all-trans-polyprenyl)phenol + S-adenosyl-L-homocysteine + H(+). It participates in cofactor biosynthesis; ubiquinone biosynthesis. Functionally, O-methyltransferase that catalyzes the 2 O-methylation steps in the ubiquinone biosynthetic pathway. The protein is Ubiquinone biosynthesis O-methyltransferase of Bordetella bronchiseptica (strain ATCC BAA-588 / NCTC 13252 / RB50) (Alcaligenes bronchisepticus).